Here is a 354-residue protein sequence, read N- to C-terminus: MLKNDRLLRALNRQPVDRTPVWLMRQAGRYLPEYRATRARAGSFLGMAKNPDIACEVTLQPLQRFPLDAAILFSDILTIPDAMGLELYFVEGEGPKFRHPVRDAAAIHRLGVPDMETELRYVMDAVRVIRRELDGSVPLIGFSGSPWTLACYMIEGGGSKEYARIKAMAFNAPELLHHLLGTVTDAVIAYLAAQRAAGAQALQVFDTWGGVLSPAMYREFSLPYLTRIARELERGTGAERTPLVLFGKGNGAYVADLAASGAEAVGVDWTISLADAAQRAGGRVALQGNLDPATLYGSPDAIRSEVAKTLDSYAQGNGGSREGHVFNLGHGMSPDMNPEHVGVLVEAVQSLSKR.

Residues 25-29, Asp-75, Tyr-152, Thr-207, and His-330 each bind substrate; that span reads RQAGR.

Belongs to the uroporphyrinogen decarboxylase family. Homodimer.

The protein localises to the cytoplasm. The catalysed reaction is uroporphyrinogen III + 4 H(+) = coproporphyrinogen III + 4 CO2. Its pathway is porphyrin-containing compound metabolism; protoporphyrin-IX biosynthesis; coproporphyrinogen-III from 5-aminolevulinate: step 4/4. In terms of biological role, catalyzes the decarboxylation of four acetate groups of uroporphyrinogen-III to yield coproporphyrinogen-III. The sequence is that of Uroporphyrinogen decarboxylase from Xanthomonas euvesicatoria pv. vesicatoria (strain 85-10) (Xanthomonas campestris pv. vesicatoria).